We begin with the raw amino-acid sequence, 938 residues long: Isoleucine--tRNA ligase (938 aa).

The short motif at 58 to 68 is the 'HIGH' region element; it reads PYANGSIHIGH. Position 561 (glutamate 561) interacts with L-isoleucyl-5'-AMP. The 'KMSKS' region motif lies at 602 to 606; that stretch reads KMSKS. Lysine 605 lines the ATP pocket. 4 residues coordinate Zn(2+): cysteine 901, cysteine 904, cysteine 921, and cysteine 924.

This sequence belongs to the class-I aminoacyl-tRNA synthetase family. IleS type 1 subfamily. In terms of assembly, monomer. Requires Zn(2+) as cofactor.

The protein localises to the cytoplasm. The enzyme catalyses tRNA(Ile) + L-isoleucine + ATP = L-isoleucyl-tRNA(Ile) + AMP + diphosphate. In terms of biological role, catalyzes the attachment of isoleucine to tRNA(Ile). As IleRS can inadvertently accommodate and process structurally similar amino acids such as valine, to avoid such errors it has two additional distinct tRNA(Ile)-dependent editing activities. One activity is designated as 'pretransfer' editing and involves the hydrolysis of activated Val-AMP. The other activity is designated 'posttransfer' editing and involves deacylation of mischarged Val-tRNA(Ile). This is Isoleucine--tRNA ligase from Klebsiella pneumoniae (strain 342).